The sequence spans 26 residues: Acetyl-CoA acetyltransferase (26 aa).

The Acyl-thioester intermediate role is filled by cysteine 21.

Belongs to the thiolase-like superfamily. Thiolase family. Homotetramer. Succinylation, adjacent to a coenzyme A binding site. Desuccinylated by SIRT5.

It localises to the mitochondrion. It catalyses the reaction 2 acetyl-CoA = acetoacetyl-CoA + CoA. The chain is Acetyl-CoA acetyltransferase from Sus scrofa (Pig).